We begin with the raw amino-acid sequence, 265 residues long: Thiazole synthase (265 aa).

Catalysis depends on K103, which acts as the Schiff-base intermediate with DXP. 1-deoxy-D-xylulose 5-phosphate is bound by residues G164, 190 to 191 (AG), and 212 to 213 (NT).

This sequence belongs to the ThiG family. As to quaternary structure, homotetramer. Forms heterodimers with either ThiH or ThiS.

It localises to the cytoplasm. The enzyme catalyses [ThiS sulfur-carrier protein]-C-terminal-Gly-aminoethanethioate + 2-iminoacetate + 1-deoxy-D-xylulose 5-phosphate = [ThiS sulfur-carrier protein]-C-terminal Gly-Gly + 2-[(2R,5Z)-2-carboxy-4-methylthiazol-5(2H)-ylidene]ethyl phosphate + 2 H2O + H(+). It participates in cofactor biosynthesis; thiamine diphosphate biosynthesis. In terms of biological role, catalyzes the rearrangement of 1-deoxy-D-xylulose 5-phosphate (DXP) to produce the thiazole phosphate moiety of thiamine. Sulfur is provided by the thiocarboxylate moiety of the carrier protein ThiS. In vitro, sulfur can be provided by H(2)S. This chain is Thiazole synthase, found in Bordetella avium (strain 197N).